Consider the following 962-residue polypeptide: Villin-5 (962 aa).

Gelsolin-like repeat units follow at residues 29–79 (FKPV…DEAG), 150–190 (VRVK…QERA), 262–305 (GQTD…DQRK), 396–453 (LQVW…EDRA), 534–574 (MQAI…EDQE), and 636–677 (LKAT…KKKP). The interval 749 to 785 (KPKRRVPAYSSRSTVPDKSQPRSRSMTFSPDRARVRG) is disordered. Over residues 758–776 (SSRSTVPDKSQPRSRSMTF) the composition is skewed to polar residues. Phosphoserine occurs at positions 777 and 787. Residues 845 to 862 (EKPTPTSQEPPTSPSSSE) are compositionally biased toward low complexity. Residues 845–917 (EKPTPTSQEP…LKTDSEDPVS (73 aa)) are disordered. The span at 863–875 (ATNQAEAPKSTSE) shows a compositional bias: polar residues. Ser883 is subject to Phosphoserine. Over residues 889-898 (SKEEEAEEES) the composition is skewed to acidic residues. One can recognise an HP domain in the interval 897 to 962 (ESSLPTFPYE…NKLKMSVNLF (66 aa)).

Belongs to the villin/gelsolin family. As to expression, ubiquitous, but expressed preferentially in pollen and stamens.

It localises to the cytoplasm. It is found in the cytoskeleton. Its function is as follows. Major actin filament stabilizing factor and regulator of actin dynamics. Binds actin and actin filament bundles in a Ca(2+)-insensitive manner, but caps the barbed end of actin filaments and is able to sever them in a calcium-dependent manner. Required for the construction of actin collars in pollen tubes. Acts synergistically with VLN2 (AC O81644) to regulate polarized pollen tube growth. The chain is Villin-5 from Arabidopsis thaliana (Mouse-ear cress).